The following is a 267-amino-acid chain: Undecaprenyl-diphosphatase (267 aa).

8 helical membrane-spanning segments follow: residues 5-25, 45-65, 82-102, 108-128, 143-163, 183-203, 213-233, and 243-263; these read TIVAAALGLLEGLTEFIPVSS, FEVLIQLGAIMAILGVYAGRL, ILAVLLAFLPAVVIGVLAHRI, FETPTLIAVMLIVGGVVLLFV, FPLPMALKIGFIQCLAMIPGV, AAEFSFFLSMPTMLGAFVYDL, AATGNIVIGFVCAFLAAVVVV, and YGYGLFAWWRIAVGVAVLLAL.

Belongs to the UppP family.

The protein resides in the cell inner membrane. It carries out the reaction di-trans,octa-cis-undecaprenyl diphosphate + H2O = di-trans,octa-cis-undecaprenyl phosphate + phosphate + H(+). Its function is as follows. Catalyzes the dephosphorylation of undecaprenyl diphosphate (UPP). Confers resistance to bacitracin. This Paracoccus denitrificans (strain Pd 1222) protein is Undecaprenyl-diphosphatase.